Reading from the N-terminus, the 47-residue chain is Delta-ctenitoxin-Pr2d (47 aa).

5 disulfides stabilise this stretch: C3-C17, C10-C23, C14-C46, C16-C31, and C25-C29.

As to expression, expressed by the venom gland.

The protein resides in the secreted. In terms of biological role, blocks voltage-gated sodium channels (Nav). Causes rapid general spastic paralysis and death when injected in mice at dose levels of less than 2 ug per mouse. This Phoneutria reidyi (Brazilian Amazonian armed spider) protein is Delta-ctenitoxin-Pr2d.